A 210-amino-acid chain; its full sequence is Riboflavin kinase (210 aa).

Pro residues predominate over residues 1–11 (MRPSNPRPPVT). The interval 1-24 (MRPSNPRPPVTGPDSGPEAPFPIR) is disordered. Positions 44 and 46 each coordinate Mg(2+). Glu-113 (nucleophile) is an active-site residue.

The protein belongs to the flavokinase family. The cofactor is Zn(2+). Mg(2+) serves as cofactor.

The enzyme catalyses riboflavin + ATP = FMN + ADP + H(+). The protein operates within cofactor biosynthesis; FMN biosynthesis; FMN from riboflavin (ATP route): step 1/1. Functionally, catalyzes the phosphorylation of riboflavin (vitamin B2) to form flavin mononucleotide (FMN) coenzyme. In Emericella nidulans (strain FGSC A4 / ATCC 38163 / CBS 112.46 / NRRL 194 / M139) (Aspergillus nidulans), this protein is Riboflavin kinase (fmn1).